The sequence spans 524 residues: Inosine-5'-monophosphate dehydrogenase 4 (524 aa).

CBS domains lie at 122 to 183 and 185 to 241; these read FINS…VVSE and MTKN…PLAS. The residue at position 125 (S125) is a Phosphoserine. Residues 279–281 and 329–331 each bind NAD(+); these read DSS and GMG. Residues G331 and G333 each coordinate K(+). S334 lines the IMP pocket. C336 is a binding site for K(+). C336 functions as the Thioimidate intermediate in the catalytic mechanism. IMP contacts are provided by residues 369-371, 392-393, and 416-420; these read DGG, GG, and YRGMG. R438 (proton acceptor) is an active-site residue. IMP is bound at residue Q450. E509, G510, and G511 together coordinate K(+).

This sequence belongs to the IMPDH/GMPR family. Homotetramer. Seems to be able to form heterotetramers composed from more than 1 of the 3 IMPDH gene products (IMD2-4). K(+) serves as cofactor.

It is found in the cytoplasm. The enzyme catalyses IMP + NAD(+) + H2O = XMP + NADH + H(+). It participates in purine metabolism; XMP biosynthesis via de novo pathway; XMP from IMP: step 1/1. With respect to regulation, mycophenolic acid (MPA) is a non-competitive inhibitor that prevents formation of the closed enzyme conformation by binding to the same site as the amobile flap. In contrast, mizoribine monophosphate (MZP) is a competitive inhibitor that induces the closed conformation. MPA is a potent inhibitor of mammalian IMPDHs but a poor inhibitor of the bacterial enzymes. MZP is a more potent inhibitor of bacterial IMPDH. In terms of biological role, catalyzes the conversion of inosine 5'-phosphate (IMP) to xanthosine 5'-phosphate (XMP), the first committed and rate-limiting step in the de novo synthesis of guanine nucleotides, and therefore plays an important role in the regulation of cell growth. The chain is Inosine-5'-monophosphate dehydrogenase 4 from Saccharomyces cerevisiae (strain ATCC 204508 / S288c) (Baker's yeast).